The primary structure comprises 812 residues: Fibroblast growth factor receptor 1 (812 aa).

An N-terminal signal peptide occupies residues 1–20 (MFSGMSLLLWGVLLGAALSV). The Extracellular portion of the chain corresponds to 21 to 371 (ARPPSTLPDE…PALLASPLQL (351 aa)). An Ig-like C2-type 1 domain is found at 25 to 118 (STLPDEVAPK…YTVLCSVNVS (94 aa)). Cys-54 and Cys-100 are joined by a disulfide. Asn-76, Asn-116, Asn-133, Asn-223, Asn-236, Asn-260, Asn-292, Asn-313, and Asn-326 each carry an N-linked (GlcNAc...) asparagine glycan. Residues 121–153 (LPSAEDDDEDDDNSSSEEKAAENSKPNRPLWSH) are disordered. Residues 124 to 135 (AEDDDEDDDNSS) are compositionally biased toward acidic residues. 2 Ig-like C2-type domains span residues 154–242 (PEKM…YQLD) and 251–353 (PILQ…AWLT). Cys-174 and Cys-226 form a disulfide bridge. Cys-273 and Cys-337 are disulfide-bonded. Residues 372 to 393 (EIIIYCTGAAFVSAMVVTIIIF) traverse the membrane as a helical segment. At 394 to 812 (KMKHPSKKSD…KYSNGGLKKR (419 aa)) the chain is on the cytoplasmic side. Tyr-457 carries the post-translational modification Phosphotyrosine; by autocatalysis. The Protein kinase domain maps to 472 to 761 (LILGKPLGEG…LALSSNQEYL (290 aa)). ATP contacts are provided by residues 478-484 (LGEGCFG), Lys-508, 556-558 (EYT), and Asn-562. Phosphotyrosine; by autocatalysis is present on residues Tyr-577 and Tyr-579. Residue Asp-617 is the Proton acceptor of the active site. ATP-binding residues include Arg-621 and Asp-635. 4 positions are modified to phosphotyrosine; by autocatalysis: Tyr-647, Tyr-648, Tyr-724, and Tyr-760. The disordered stretch occupies residues 784 to 812 (SGEDSMFSHDPLPDEPCLPKYSNGGLKKR).

Belongs to the protein kinase superfamily. Tyr protein kinase family. Fibroblast growth factor receptor subfamily. Monomer. Homodimer after ligand binding. Interacts with il17rd. Post-translationally, autophosphorylated. Binding of FGF family members together with heparan sulfate proteoglycan or heparin promotes receptor dimerization and autophosphorylation on tyrosine residues. Autophosphorylation occurs in trans between the two FGFR molecules present in the dimer and proceeds in a highly ordered manner. Phosphotyrosine residues provide docking sites for interacting proteins and so are crucial for FGFR1 function and its regulation. Ubiquitinated. FGFR1 is rapidly ubiquitinated after autophosphorylation, leading to internalization and degradation. In terms of processing, N-glycosylated in the endoplasmic reticulum. The N-glycan chains undergo further maturation to an Endo H-resistant form in the Golgi apparatus.

Its subcellular location is the cell membrane. It is found in the nucleus. It localises to the cytoplasm. The protein localises to the cytosol. The protein resides in the cytoplasmic vesicle. It catalyses the reaction L-tyrosyl-[protein] + ATP = O-phospho-L-tyrosyl-[protein] + ADP + H(+). Its activity is regulated as follows. Present in an inactive conformation in the absence of bound ligand. Ligand binding leads to dimerization and activation by sequential autophosphorylation on tyrosine residues. In terms of biological role, tyrosine-protein kinase that acts as a cell-surface receptor for fibroblast growth factors and plays an essential role in the regulation of embryonic development, cell proliferation, differentiation and migration. Required for normal mesoderm patterning and normal skeletogenesis. Phosphorylates PLCG1, FRS2, GAB1 and SHB. Ligand binding leads to the activation of several signaling cascades. Activation of PLCG1 leads to the production of the cellular signaling molecules diacylglycerol and inositol-1,4,5-trisphosphate. Phosphorylation of FRS2 triggers recruitment of GRB2, GAB1, PIK3R1 and SOS1, and mediates activation of RAS, MAPK1/ERK2, MAPK3/ERK1 and the MAP kinase signaling pathway, as well as of the AKT1 signaling pathway. Promotes phosphorylation of SHC1, STAT1 and PTPN11/SHP2. In the nucleus, enhances RPS6KA1 and CREB1 activity and contributes to the regulation of transcription. FGFR1 signaling is down-regulated by ubiquitination, internalization and degradation. The protein is Fibroblast growth factor receptor 1 (fgfr1) of Xenopus laevis (African clawed frog).